Reading from the N-terminus, the 208-residue chain is Protein-L-isoaspartate O-methyltransferase (208 aa).

The active site involves Ser59.

This sequence belongs to the methyltransferase superfamily. L-isoaspartyl/D-aspartyl protein methyltransferase family.

It is found in the cytoplasm. The catalysed reaction is [protein]-L-isoaspartate + S-adenosyl-L-methionine = [protein]-L-isoaspartate alpha-methyl ester + S-adenosyl-L-homocysteine. Functionally, catalyzes the methyl esterification of L-isoaspartyl residues in peptides and proteins that result from spontaneous decomposition of normal L-aspartyl and L-asparaginyl residues. It plays a role in the repair and/or degradation of damaged proteins. This chain is Protein-L-isoaspartate O-methyltransferase, found in Sodalis glossinidius (strain morsitans).